We begin with the raw amino-acid sequence, 211 residues long: Phosphoribosyl-dephospho-CoA transferase (211 aa).

Catalysis depends on residues aspartate 136 and aspartate 138.

Belongs to the MdcG family.

It carries out the reaction apo-[malonate decarboxylase ACP] + 2'-(5''-triphospho-alpha-D-ribosyl)-3'-dephospho-CoA = holo-[malonate decarboxylase ACP] + diphosphate. Functionally, transfers 2'-(5-triphosphoribosyl)-3'-dephosphocoenzyme-A to the apo-[acyl-carrier-protein] of the malonate decarboxylase to yield holo-[acyl-carrier-protein]. The chain is Phosphoribosyl-dephospho-CoA transferase from Pseudomonas syringae pv. tomato (strain ATCC BAA-871 / DC3000).